The sequence spans 176 residues: NAD(P)H-quinone oxidoreductase subunit 6, chloroplastic (176 aa).

5 consecutive transmembrane segments (helical) span residues 10–30 (ILMLFGGFILLLGGLGVVLLT), 33–53 (IYSAFSLGLVLVCISLFYFLL), 60–80 (VAQLLIYVGAINVLIIFAVMF), 95–115 (IGDGFTSLVCITFVFSLMTTI), and 152–172 (FYLPFELISIILLVSLIGAIT).

Belongs to the complex I subunit 6 family. NDH is composed of at least 16 different subunits, 5 of which are encoded in the nucleus.

It is found in the plastid. The protein localises to the chloroplast thylakoid membrane. It carries out the reaction a plastoquinone + NADH + (n+1) H(+)(in) = a plastoquinol + NAD(+) + n H(+)(out). The enzyme catalyses a plastoquinone + NADPH + (n+1) H(+)(in) = a plastoquinol + NADP(+) + n H(+)(out). Its function is as follows. NDH shuttles electrons from NAD(P)H:plastoquinone, via FMN and iron-sulfur (Fe-S) centers, to quinones in the photosynthetic chain and possibly in a chloroplast respiratory chain. The immediate electron acceptor for the enzyme in this species is believed to be plastoquinone. Couples the redox reaction to proton translocation, and thus conserves the redox energy in a proton gradient. This is NAD(P)H-quinone oxidoreductase subunit 6, chloroplastic (ndhG) from Hordeum vulgare (Barley).